The sequence spans 400 residues: uncharacterized protein (400 aa).

It belongs to the mimivirus R640 family.

It is found in the virion. This is an uncharacterized protein from Acanthamoeba polyphaga (Amoeba).